Reading from the N-terminus, the 150-residue chain is Large ribosomal subunit protein bL9 (150 aa).

It belongs to the bacterial ribosomal protein bL9 family.

Its function is as follows. Binds to the 23S rRNA. This is Large ribosomal subunit protein bL9 from Vibrio atlanticus (strain LGP32) (Vibrio splendidus (strain Mel32)).